Reading from the N-terminus, the 224-residue chain is Urease accessory protein UreF (224 aa).

This sequence belongs to the UreF family. As to quaternary structure, ureD, UreF and UreG form a complex that acts as a GTP-hydrolysis-dependent molecular chaperone, activating the urease apoprotein by helping to assemble the nickel containing metallocenter of UreC. The UreE protein probably delivers the nickel.

It localises to the cytoplasm. In terms of biological role, required for maturation of urease via the functional incorporation of the urease nickel metallocenter. This Pseudomonas savastanoi pv. phaseolicola (strain 1448A / Race 6) (Pseudomonas syringae pv. phaseolicola (strain 1448A / Race 6)) protein is Urease accessory protein UreF.